A 155-amino-acid chain; its full sequence is Small ribosomal subunit protein uS13 (155 aa).

Residues 135–145 are compositionally biased toward basic residues; the sequence is QHTKTTGRRGR. The disordered stretch occupies residues 135–155; sequence QHTKTTGRRGRTVGVSRTKGA. The segment covering 146 to 155 has biased composition (low complexity); it reads TVGVSRTKGA.

This sequence belongs to the universal ribosomal protein uS13 family. Component of the small ribosomal subunit.

The protein resides in the cytoplasm. In terms of biological role, component of the small ribosomal subunit. The ribosome is a large ribonucleoprotein complex responsible for the synthesis of proteins in the cell. The polypeptide is Small ribosomal subunit protein uS13 (RPS18) (Entamoeba histolytica (strain ATCC 30459 / HM-1:IMSS / ABRM)).